The chain runs to 390 residues: Lipid-A-disaccharide synthase (390 aa).

Belongs to the LpxB family.

The enzyme catalyses a lipid X + a UDP-2-N,3-O-bis[(3R)-3-hydroxyacyl]-alpha-D-glucosamine = a lipid A disaccharide + UDP + H(+). The protein operates within bacterial outer membrane biogenesis; LPS lipid A biosynthesis. Functionally, condensation of UDP-2,3-diacylglucosamine and 2,3-diacylglucosamine-1-phosphate to form lipid A disaccharide, a precursor of lipid A, a phosphorylated glycolipid that anchors the lipopolysaccharide to the outer membrane of the cell. This is Lipid-A-disaccharide synthase from Haemophilus influenzae (strain 86-028NP).